The following is a 294-amino-acid chain: tRNA dimethylallyltransferase (294 aa).

ATP is bound at residue 10–17 (GPTAVGKT). 12 to 17 (TAVGKT) contributes to the substrate binding site. The interval 35–38 (DSQQ) is interaction with substrate tRNA.

It belongs to the IPP transferase family. In terms of assembly, monomer. Mg(2+) is required as a cofactor.

The enzyme catalyses adenosine(37) in tRNA + dimethylallyl diphosphate = N(6)-dimethylallyladenosine(37) in tRNA + diphosphate. In terms of biological role, catalyzes the transfer of a dimethylallyl group onto the adenine at position 37 in tRNAs that read codons beginning with uridine, leading to the formation of N6-(dimethylallyl)adenosine (i(6)A). The polypeptide is tRNA dimethylallyltransferase (Streptococcus pneumoniae (strain ATCC 700669 / Spain 23F-1)).